We begin with the raw amino-acid sequence, 180 residues long: Beta-lactoglobulin-1 (180 aa).

Positions 1–18 (MKCLLLALGLALMCGIQA) are cleaved as a signal peptide. Disulfide bonds link cysteine 84-cysteine 178 and cysteine 124-cysteine 137.

The protein belongs to the calycin superfamily. Lipocalin family. Monomer.

It is found in the secreted. In terms of biological role, lactoglobulin is the primary component of whey, it binds retinol and is probably involved in the transport of that molecule. The sequence is that of Beta-lactoglobulin-1 (LGB1) from Equus caballus (Horse).